Here is a 334-residue protein sequence, read N- to C-terminus: tRNA methyltransferase 10 homolog A (334 aa).

Disordered stretches follow at residues 1–101 (MSLE…SRKR) and 290–334 (PLTE…EQNS). The segment covering 26-40 (HAGNNTPLQENSSAP) has biased composition (polar residues). A coiled-coil region spans residues 62-94 (KQWEDQRELRKQKRKEKRQKRKLERQAQAEHNI). The segment covering 71–84 (RKQKRKEKRQKRKL) has biased composition (basic residues). Basic and acidic residues predominate over residues 85–98 (ERQAQAEHNIDANS). The SAM-dependent MTase TRM10-type domain occupies 98–289 (SRKRFRHEVQ…SVLPQRKGAI (192 aa)). Acidic residues predominate over residues 305 to 317 (QEDGEDSDSDSSI).

The protein belongs to the class IV-like SAM-binding methyltransferase superfamily. TRM10 family.

It catalyses the reaction guanosine(9) in tRNA + S-adenosyl-L-methionine = N(1)-methylguanosine(9) in tRNA + S-adenosyl-L-homocysteine + H(+). In terms of biological role, S-adenosyl-L-methionine-dependent guanine N(1)-methyltransferase that catalyzes the formation of N(1)-methylguanine at position 9 (m1G9) in tRNAs. Probably not able to catalyze formation of N(1)-methyladenine at position 9 (m1A9) in tRNAs. This chain is tRNA methyltransferase 10 homolog A (trmt10a), found in Xenopus tropicalis (Western clawed frog).